Consider the following 361-residue polypeptide: Phospho-N-acetylmuramoyl-pentapeptide-transferase (361 aa).

The next 10 membrane-spanning stretches (helical) occupy residues 27–47 (GAIVTAVLFVFLFGPGIISTL), 72–92 (TPTMGGLMIFSGLIVATLLWA), 94–114 (LSNLYVWVVLFVTTGFGLIGF), 133–153 (ARLAIEALIAGIAVVLMINAG), 169–189 (LLLDLGWFFVVFGAFVIVAAG), 200–220 (GLAIVPVMIAAASFGMISYLS), 237–257 (VGELAVICGAIIGAGLGFLWF), 264–284 (IFMGDTGSLALGGLLGSIAVA), 289–309 (IVLAVIGGLFVLEAVSVIVQV), and 338–358 (QVVIRFWIIAVVLALLGLATL).

The protein belongs to the glycosyltransferase 4 family. MraY subfamily. It depends on Mg(2+) as a cofactor.

It is found in the cell inner membrane. It carries out the reaction UDP-N-acetyl-alpha-D-muramoyl-L-alanyl-gamma-D-glutamyl-meso-2,6-diaminopimeloyl-D-alanyl-D-alanine + di-trans,octa-cis-undecaprenyl phosphate = di-trans,octa-cis-undecaprenyl diphospho-N-acetyl-alpha-D-muramoyl-L-alanyl-D-glutamyl-meso-2,6-diaminopimeloyl-D-alanyl-D-alanine + UMP. It participates in cell wall biogenesis; peptidoglycan biosynthesis. Its function is as follows. Catalyzes the initial step of the lipid cycle reactions in the biosynthesis of the cell wall peptidoglycan: transfers peptidoglycan precursor phospho-MurNAc-pentapeptide from UDP-MurNAc-pentapeptide onto the lipid carrier undecaprenyl phosphate, yielding undecaprenyl-pyrophosphoryl-MurNAc-pentapeptide, known as lipid I. The sequence is that of Phospho-N-acetylmuramoyl-pentapeptide-transferase from Azorhizobium caulinodans (strain ATCC 43989 / DSM 5975 / JCM 20966 / LMG 6465 / NBRC 14845 / NCIMB 13405 / ORS 571).